Reading from the N-terminus, the 139-residue chain is Large ribosomal subunit protein uL16 (139 aa).

It belongs to the universal ribosomal protein uL16 family. Part of the 50S ribosomal subunit.

In terms of biological role, binds 23S rRNA and is also seen to make contacts with the A and possibly P site tRNAs. The sequence is that of Large ribosomal subunit protein uL16 from Prosthecochloris aestuarii (strain DSM 271 / SK 413).